Here is a 198-residue protein sequence, read N- to C-terminus: Recombination protein RecR (198 aa).

The C4-type zinc-finger motif lies at 56–71 (CKVCGNFSEEDECVIC). A Toprim domain is found at 79-174 (GVICVVEEPK…RVSKLASGLP (96 aa)).

It belongs to the RecR family.

May play a role in DNA repair. It seems to be involved in an RecBC-independent recombinational process of DNA repair. It may act with RecF and RecO. In Tropheryma whipplei (strain TW08/27) (Whipple's bacillus), this protein is Recombination protein RecR.